Reading from the N-terminus, the 417-residue chain is Serpin H1 (417 aa).

The signal sequence occupies residues 1–18 (MRSLLLLSAFCLLEAALA). Lys94 is subject to N6-succinyllysine. Residues Asn120 and Asn125 are each glycosylated (N-linked (GlcNAc...) asparagine). At Ser141 the chain carries Phosphoserine. N6-acetyllysine is present on Lys206. At Lys295 the chain carries N6-succinyllysine. The residue at position 318 (Lys318) is an N6-acetyllysine. A Prevents secretion from ER motif is present at residues 414 to 417 (RDEL).

It belongs to the serpin family.

It localises to the endoplasmic reticulum lumen. Binds specifically to collagen. Could be involved as a chaperone in the biosynthetic pathway of collagen. This chain is Serpin H1 (SERPINH1), found in Pongo abelii (Sumatran orangutan).